The chain runs to 313 residues: Probable GTP 3',8-cyclase (313 aa).

Residues 4-224 (RFGRSIEDLR…EIRSKHYRPR (221 aa)) form the Radical SAM core domain. A GTP-binding site is contributed by Arg-13. Cys-20, Cys-24, and Cys-27 together coordinate [4Fe-4S] cluster. Lys-60 contacts GTP. Gly-64 provides a ligand contact to S-adenosyl-L-methionine. Thr-90 serves as a coordination point for GTP. Ser-114 is an S-adenosyl-L-methionine binding site. Lys-151 is a GTP binding site. Positions 244 and 247 each coordinate [4Fe-4S] cluster. Residue 249–251 (RIR) participates in GTP binding. Cys-261 lines the [4Fe-4S] cluster pocket.

This sequence belongs to the radical SAM superfamily. MoaA family. Requires [4Fe-4S] cluster as cofactor.

It catalyses the reaction GTP + AH2 + S-adenosyl-L-methionine = (8S)-3',8-cyclo-7,8-dihydroguanosine 5'-triphosphate + 5'-deoxyadenosine + L-methionine + A + H(+). The protein operates within cofactor biosynthesis; molybdopterin biosynthesis. Functionally, catalyzes the cyclization of GTP to (8S)-3',8-cyclo-7,8-dihydroguanosine 5'-triphosphate. In Sulfurisphaera tokodaii (strain DSM 16993 / JCM 10545 / NBRC 100140 / 7) (Sulfolobus tokodaii), this protein is Probable GTP 3',8-cyclase.